The following is a 146-amino-acid chain: Endothelial differentiation-related factor 1 homolog (146 aa).

Residues 13 to 53 form a disordered region; sequence RKKGSAAQSKSKQAVTAAQRKGEAVETSKKWAAGQNKQHVV. The segment covering 17-31 has biased composition (low complexity); sequence SAAQSKSKQAVTAAQ. Positions 32–41 are enriched in basic and acidic residues; the sequence is RKGEAVETSK. Positions 80–134 constitute an HTH cro/C1-type domain; that stretch reads IQQGRQNKGLTQKDLATKINEKPQIIAEYECGKAIPNNQVMGKIERAIGLKLRGK. A DNA-binding region (H-T-H motif) is located at residues 91–110; the sequence is QKDLATKINEKPQIIAEYEC.

It localises to the nucleus. In terms of biological role, probable transcriptional coactivator. This is Endothelial differentiation-related factor 1 homolog (edf1) from Danio rerio (Zebrafish).